The following is a 233-amino-acid chain: Putative cobalt transport protein CbiM (233 aa).

A run of 6 helical transmembrane segments spans residues 9–29, 43–63, 75–95, 107–127, 138–158, and 177–197; these read PPMW…YGIV, PLVA…MPSV, LGAV…VLLF, TLGA…VIVY, TVGI…TTAV, and IVIY…LTVI.

The protein belongs to the CbiM family. In terms of assembly, forms an energy-coupling factor (ECF) transporter complex composed of an ATP-binding protein (A component, CbiO), a transmembrane protein (T component, CbiQ) and 2 possible substrate-capture proteins (S components, CbiM and CbiN) of unknown stoichimetry.

It is found in the cell membrane. It functions in the pathway cofactor biosynthesis; adenosylcobalamin biosynthesis. Part of the energy-coupling factor (ECF) transporter complex CbiMNOQ involved in cobalt import. This is Putative cobalt transport protein CbiM from Methanocaldococcus jannaschii (strain ATCC 43067 / DSM 2661 / JAL-1 / JCM 10045 / NBRC 100440) (Methanococcus jannaschii).